Reading from the N-terminus, the 373-residue chain is 3-dehydroquinate synthase (373 aa).

NAD(+) is bound by residues 74–79 (DAEAGK), 108–112 (GAATD), 132–133 (TT), Lys145, Lys154, and 172–175 (TLET). Zn(2+)-binding residues include Glu187, His250, and His266.

Belongs to the sugar phosphate cyclases superfamily. Dehydroquinate synthase family. Co(2+) is required as a cofactor. The cofactor is Zn(2+). NAD(+) serves as cofactor.

Its subcellular location is the cytoplasm. The catalysed reaction is 7-phospho-2-dehydro-3-deoxy-D-arabino-heptonate = 3-dehydroquinate + phosphate. The protein operates within metabolic intermediate biosynthesis; chorismate biosynthesis; chorismate from D-erythrose 4-phosphate and phosphoenolpyruvate: step 2/7. Functionally, catalyzes the conversion of 3-deoxy-D-arabino-heptulosonate 7-phosphate (DAHP) to dehydroquinate (DHQ). The protein is 3-dehydroquinate synthase of Nocardia farcinica (strain IFM 10152).